Here is a 119-residue protein sequence, read N- to C-terminus: Large ribosomal subunit protein P3z (119 aa).

Residues Ala79–Gly90 show a composition bias toward gly residues. The tract at residues Ala79–Gly119 is disordered. A compositionally biased stretch (basic and acidic residues) spans Pro96–Glu105.

It belongs to the eukaryotic ribosomal protein P1/P2 family. Post-translationally, phosphorylated.

Plays an important role in the elongation step of protein synthesis. The protein is Large ribosomal subunit protein P3z (RPP3A) of Arabidopsis thaliana (Mouse-ear cress).